The following is a 114-amino-acid chain: Large ribosomal subunit protein uL22 (114 aa).

It belongs to the universal ribosomal protein uL22 family. Part of the 50S ribosomal subunit.

In terms of biological role, this protein binds specifically to 23S rRNA; its binding is stimulated by other ribosomal proteins, e.g. L4, L17, and L20. It is important during the early stages of 50S assembly. It makes multiple contacts with different domains of the 23S rRNA in the assembled 50S subunit and ribosome. Its function is as follows. The globular domain of the protein is located near the polypeptide exit tunnel on the outside of the subunit, while an extended beta-hairpin is found that lines the wall of the exit tunnel in the center of the 70S ribosome. This chain is Large ribosomal subunit protein uL22, found in Desulfosudis oleivorans (strain DSM 6200 / JCM 39069 / Hxd3) (Desulfococcus oleovorans).